Reading from the N-terminus, the 198-residue chain is Probable GTP-binding protein EngB (198 aa).

An EngB-type G domain is found at 36-198 (SDPQFAFIGR…NLSKLQELLE (163 aa)). Residues 44–51 (GRSNVGKS), 70–74 (GRTQL), 88–91 (DLPG), 155–158 (NKID), and 182–184 (ISA) each bind GTP. The Mg(2+) site is built by serine 51 and threonine 72.

The protein belongs to the TRAFAC class TrmE-Era-EngA-EngB-Septin-like GTPase superfamily. EngB GTPase family. It depends on Mg(2+) as a cofactor.

Necessary for normal cell division and for the maintenance of normal septation. The sequence is that of Probable GTP-binding protein EngB from Mesomycoplasma hyopneumoniae (strain J / ATCC 25934 / NCTC 10110) (Mycoplasma hyopneumoniae).